The sequence spans 301 residues: Homoserine O-acetyltransferase (301 aa).

Cys142 acts as the Acyl-thioester intermediate in catalysis. Substrate is bound by residues Lys163 and Ser192. The Proton acceptor role is filled by His235. The active site involves Glu237. Position 249 (Arg249) interacts with substrate.

It belongs to the MetA family.

It localises to the cytoplasm. The enzyme catalyses L-homoserine + acetyl-CoA = O-acetyl-L-homoserine + CoA. The protein operates within amino-acid biosynthesis; L-methionine biosynthesis via de novo pathway; O-acetyl-L-homoserine from L-homoserine: step 1/1. Functionally, transfers an acetyl group from acetyl-CoA to L-homoserine, forming acetyl-L-homoserine. This is Homoserine O-acetyltransferase from Bacillus cereus (strain AH187).